A 375-amino-acid chain; its full sequence is o-succinylbenzoate synthase (375 aa).

Lys-166 serves as the catalytic Proton donor. Positions 191, 216, and 241 each coordinate Mg(2+). Catalysis depends on Lys-265, which acts as the Proton acceptor.

Belongs to the mandelate racemase/muconate lactonizing enzyme family. MenC type 2 subfamily. As to quaternary structure, homotetramer. A divalent metal cation is required as a cofactor.

It catalyses the reaction (1R,6R)-6-hydroxy-2-succinyl-cyclohexa-2,4-diene-1-carboxylate = 2-succinylbenzoate + H2O. The enzyme catalyses N-acetyl-D-methionine = N-acetyl-L-methionine. It participates in quinol/quinone metabolism; 1,4-dihydroxy-2-naphthoate biosynthesis; 1,4-dihydroxy-2-naphthoate from chorismate: step 4/7. Its pathway is quinol/quinone metabolism; menaquinone biosynthesis. In terms of biological role, converts 2-succinyl-6-hydroxy-2,4-cyclohexadiene-1-carboxylate (SHCHC) to 2-succinylbenzoate (OSB). Also acts as a N-succinylamino acid racemase (NSAR) that catalyzes the racemization of N-succinyl-D/L-phenylalanine. Can catalyze the racemization of a broad range of N-acylamino acids, including N-acetyl-D-methionine, N-formyl-D/L-methionine, N-formyl-D/L-norleucine, N-formyl-D/L-aminobutyric acid, N-formyl-D/L-norvaline, N-formyl-D/L-homophenylalanine, N-carbamoyl-D-methionine and N-carbamoyl-D-norleucine. May be a bifunctional enzyme involved in menaquinone biosynthesis and in an irreversible pathway for the conversion of D- to L-amino acids, thereby facilitating the survival and/or growth of the organism. The protein is o-succinylbenzoate synthase of Geobacillus stearothermophilus (Bacillus stearothermophilus).